The sequence spans 350 residues: Uroporphyrinogen decarboxylase (350 aa).

Residues 27–31, phenylalanine 46, aspartate 76, tyrosine 152, serine 207, and histidine 321 contribute to the substrate site; that span reads RQAGR.

It belongs to the uroporphyrinogen decarboxylase family. In terms of assembly, homodimer.

It localises to the cytoplasm. It catalyses the reaction uroporphyrinogen III + 4 H(+) = coproporphyrinogen III + 4 CO2. Its pathway is porphyrin-containing compound metabolism; protoporphyrin-IX biosynthesis; coproporphyrinogen-III from 5-aminolevulinate: step 4/4. In terms of biological role, catalyzes the decarboxylation of four acetate groups of uroporphyrinogen-III to yield coproporphyrinogen-III. This is Uroporphyrinogen decarboxylase from Listeria welshimeri serovar 6b (strain ATCC 35897 / DSM 20650 / CCUG 15529 / CIP 8149 / NCTC 11857 / SLCC 5334 / V8).